We begin with the raw amino-acid sequence, 525 residues long: GMP synthase [glutamine-hydrolyzing] (525 aa).

The region spanning 9-207 (RILILDFGSQ…ILDICGCEAL (199 aa)) is the Glutamine amidotransferase type-1 domain. Residue C86 is the Nucleophile of the active site. Catalysis depends on residues H181 and E183. The GMPS ATP-PPase domain maps to 208–400 (WTPSKIAEDA…LGLPYDMVYR (193 aa)). 235 to 241 (SGGVDSS) lines the ATP pocket.

As to quaternary structure, homodimer.

It catalyses the reaction XMP + L-glutamine + ATP + H2O = GMP + L-glutamate + AMP + diphosphate + 2 H(+). It participates in purine metabolism; GMP biosynthesis; GMP from XMP (L-Gln route): step 1/1. Functionally, catalyzes the synthesis of GMP from XMP. This is GMP synthase [glutamine-hydrolyzing] from Pseudomonas fluorescens (strain ATCC BAA-477 / NRRL B-23932 / Pf-5).